The chain runs to 585 residues: Glycerol-3-phosphate dehydrogenase 2 (585 aa).

Position 37-65 (37-65 (DVVVIGGGVVGSGCALDAATRGLKVALVE)) interacts with FAD.

Belongs to the FAD-dependent glycerol-3-phosphate dehydrogenase family. It depends on FAD as a cofactor.

It is found in the cytoplasm. The enzyme catalyses a quinone + sn-glycerol 3-phosphate = dihydroxyacetone phosphate + a quinol. The polypeptide is Glycerol-3-phosphate dehydrogenase 2 (glpD2) (Mycobacterium bovis (strain ATCC BAA-935 / AF2122/97)).